The chain runs to 122 residues: Large ribosomal subunit protein uL14 (122 aa).

Belongs to the universal ribosomal protein uL14 family. As to quaternary structure, part of the 50S ribosomal subunit. Forms a cluster with proteins L3 and L19. In the 70S ribosome, L14 and L19 interact and together make contacts with the 16S rRNA in bridges B5 and B8.

In terms of biological role, binds to 23S rRNA. Forms part of two intersubunit bridges in the 70S ribosome. This Campylobacter jejuni subsp. jejuni serotype O:6 (strain 81116 / NCTC 11828) protein is Large ribosomal subunit protein uL14.